The primary structure comprises 189 residues: MIQRLKKFYLDNVVPDLYQKFEYTNIHQLPYLKKIVINCGFGEASQNSKFLEGTIKDLSIIASQKPIVTRARKAIAGFQIRKKMPVGVCVTLRGETMYAFLDRLIHLALPRIKDFQGLNWKSFDGYGNFHFGIREQLIFPEIHYDKIDKIRGMNISIITSCHTDTEALHFLTSLGIPFDSRDSFSTQER.

Belongs to the universal ribosomal protein uL5 family. Part of the 50S ribosomal subunit; contacts the 5S rRNA.

The protein resides in the plastid. Its subcellular location is the chloroplast. Its function is as follows. Binds 5S rRNA, forms part of the central protuberance of the 50S subunit. This is Large ribosomal subunit protein uL5c (rpl5) from Chara vulgaris (Common stonewort).